We begin with the raw amino-acid sequence, 710 residues long: MTSPLTLSQRALALKTDSTLTLNTQGQLGVSLTPGDGLVLNTNGLSINADPQTLAFNNSGALEVNLDPDGPWSKTATGIDLRLDPTTLEVDNWELGVKLDPDEAIDSGPDGLCLNLDETLLLATNSTSGKTELGVHLNTSGPITADDQGIDLDVDPNTMQVNTGPSGGMLAVKLKSGGGLTADPDGISVTATVAPPSISATAPLTYTSGTIALTTDTQTMQVNSNQLAVKLKTGGGLTADADGISVSVAPTPTISASPPLTYTNGQIGLSIGDQSLQVSSGQLQVKLKSQGGIQQSTQGLGVAVDQTLKIVSNTLEVNTDPSGPLTSGNNGLSLAAVTPLAVSSAGVTLNYQSPLTVTSNSLGLSIAAPLQAGAQGLTVNTMEPLSASAQGIQLHYGQGFQVVAGTLQLLTNPPIVVSSRGFTLLYTPAFTVSNNMLGLNVDGTDCVAISSAGLQIRKEAPLYVTSGSTPALALKYSSDFTITNGALALANSGGGGSSTPEVATYHCGDNLLESYDIFASLPNTNAAKVAAYCRLAAAGGVVSGTIQVTSYAGRWPKVGNSVTDGIKFAIVVSPPMDKDPRSNLSQWLGATVFPAGATTALFSPNPYGSLNTITTLPSIASDWYVPESNLVTYTKIHFKPTGSQQLQLASGELVVAAAKSPVQTTKYELIYLGFTLKQNSSGTNFFDPNASSDLSFLTPPIPFTYLGYYQ.

This sequence belongs to the adenoviridae fiber family. As to quaternary structure, homotrimer. Interacts (via N-terminal tail region) with pentons.

The protein resides in the virion. The protein localises to the host nucleus. In terms of biological role, forms spikes that protrude from each vertex of the icosahedral capsid. Interacts with host receptor to provide virion initial attachment to target cell. Fiber proteins are shed during virus entry, when virus is still at the cell surface. This Fowl adenovirus A serotype 1 (strain CELO / Phelps) (FAdV-1) protein is Fiber protein 1.